The primary structure comprises 91 residues: HssA/B-like protein 52 (91 aa).

Disordered stretches follow at residues 1–20 (MTLF…SKSS) and 72–91 (GGCG…CCGI).

This sequence belongs to the hssA/B family.

This chain is HssA/B-like protein 52 (hssl52), found in Dictyostelium discoideum (Social amoeba).